A 219-amino-acid chain; its full sequence is Probable GTP-binding protein EngB (219 aa).

One can recognise an EngB-type G domain in the interval 24–207 (VQPEVAFAGR…HALIESWVRP (184 aa)). Residues 32 to 39 (GRSNAGKS), 59 to 63 (GRTQH), 81 to 84 (DLPG), 148 to 151 (TKCD), and 185 to 188 (LFSA) contribute to the GTP site. Mg(2+) contacts are provided by S39 and T61.

This sequence belongs to the TRAFAC class TrmE-Era-EngA-EngB-Septin-like GTPase superfamily. EngB GTPase family. It depends on Mg(2+) as a cofactor.

Functionally, necessary for normal cell division and for the maintenance of normal septation. The sequence is that of Probable GTP-binding protein EngB from Burkholderia mallei (strain ATCC 23344).